The chain runs to 471 residues: V-type ATP synthase beta chain (471 aa).

It belongs to the ATPase alpha/beta chains family.

In terms of biological role, produces ATP from ADP in the presence of a proton gradient across the membrane. The V-type beta chain is a regulatory subunit. In Deinococcus deserti (strain DSM 17065 / CIP 109153 / LMG 22923 / VCD115), this protein is V-type ATP synthase beta chain.